Reading from the N-terminus, the 509-residue chain is Maturase K (509 aa).

Belongs to the intron maturase 2 family. MatK subfamily.

Its subcellular location is the plastid. It localises to the chloroplast. Its function is as follows. Usually encoded in the trnK tRNA gene intron. Probably assists in splicing its own and other chloroplast group II introns. The sequence is that of Maturase K from Jacaranda mimosifolia (Jacaranda).